Reading from the N-terminus, the 307-residue chain is Epimerase family protein ML0860 (307 aa).

Belongs to the NAD(P)-dependent epimerase/dehydratase family. SDR39U1 subfamily.

This chain is Epimerase family protein ML0860, found in Mycobacterium leprae (strain TN).